Here is a 169-residue protein sequence, read N- to C-terminus: Transmembrane protein B169L (169 aa).

Helical transmembrane passes span 28 to 48 (NPFI…FAIC) and 60 to 80 (TAIY…YVLN). A glycan (N-linked (GlcNAc...) asparagine; by host) is linked at Asn88. The interval 107 to 169 (DEIIPPISPP…EVIMPSQYNN (63 aa)) is disordered. Low complexity predominate over residues 140–154 (KPADSKPASSADSKP).

Belongs to the asfivirus B169L family.

The protein resides in the host membrane. Its subcellular location is the virion. This is Transmembrane protein B169L from Ornithodoros (relapsing fever ticks).